Consider the following 163-residue polypeptide: 3-isopropylmalate dehydratase small subunit (163 aa).

It belongs to the LeuD family. LeuD type 2 subfamily. In terms of assembly, heterodimer of LeuC and LeuD.

It catalyses the reaction (2R,3S)-3-isopropylmalate = (2S)-2-isopropylmalate. It functions in the pathway amino-acid biosynthesis; L-leucine biosynthesis; L-leucine from 3-methyl-2-oxobutanoate: step 2/4. Its function is as follows. Catalyzes the isomerization between 2-isopropylmalate and 3-isopropylmalate, via the formation of 2-isopropylmaleate. This is 3-isopropylmalate dehydratase small subunit from Brachyspira hyodysenteriae (strain ATCC 49526 / WA1).